Consider the following 373-residue polypeptide: Chaperone protein DnaJ (373 aa).

One can recognise a J domain in the interval 5-70 (DYYELLEVDR…EKRALYDQYG (66 aa)). A CR-type zinc finger spans residues 134 to 211 (GTQKEVHYSF…CSGKGYRIEK (78 aa)). Residues C147, C150, C163, C166, C185, C188, C199, and C202 each contribute to the Zn(2+) site. CXXCXGXG motif repeat units follow at residues 147–154 (CSACKGTG), 163–170 (CPECHGRG), 185–192 (CPRCHGQG), and 199–206 (CEECSGKG).

Belongs to the DnaJ family. In terms of assembly, homodimer. Zn(2+) is required as a cofactor.

It localises to the cytoplasm. Participates actively in the response to hyperosmotic and heat shock by preventing the aggregation of stress-denatured proteins and by disaggregating proteins, also in an autonomous, DnaK-independent fashion. Unfolded proteins bind initially to DnaJ; upon interaction with the DnaJ-bound protein, DnaK hydrolyzes its bound ATP, resulting in the formation of a stable complex. GrpE releases ADP from DnaK; ATP binding to DnaK triggers the release of the substrate protein, thus completing the reaction cycle. Several rounds of ATP-dependent interactions between DnaJ, DnaK and GrpE are required for fully efficient folding. Also involved, together with DnaK and GrpE, in the DNA replication of plasmids through activation of initiation proteins. This Nitratiruptor sp. (strain SB155-2) protein is Chaperone protein DnaJ.